A 519-amino-acid polypeptide reads, in one-letter code: SMR domain-containing protein At5g58720 (519 aa).

Residues 1–15 (MKQKNQHKKKKKRSC) are compositionally biased toward basic residues. Disordered stretches follow at residues 1-47 (MKQK…REIE) and 92-128 (ESGD…CSED). The span at 28 to 47 (GNKKDVEEERKDGEGKREIE) shows a compositional bias: basic and acidic residues. Low complexity predominate over residues 98-127 (STSSVASGSSGQETASTSEYGAGSSSSCSE). One can recognise a Smr domain in the interval 428 to 502 (IDLHGQHVKP…NRGTLLIKLD (75 aa)).

Interacts with PRL1.

The protein is SMR domain-containing protein At5g58720 of Arabidopsis thaliana (Mouse-ear cress).